A 115-amino-acid polypeptide reads, in one-letter code: MEKAYRIKKNEDFQKIYKNGKSVANRQFIIYRQKNSENEHFRLGISVSKKIGNAVTRNRIKRAIRESFTKHKEDIIKDDFIVIARQPSKEMTTNEINKSLEHVMKIAKGFNKRIT.

The protein belongs to the RnpA family. Consists of a catalytic RNA component (M1 or rnpB) and a protein subunit.

The catalysed reaction is Endonucleolytic cleavage of RNA, removing 5'-extranucleotides from tRNA precursor.. Functionally, RNaseP catalyzes the removal of the 5'-leader sequence from pre-tRNA to produce the mature 5'-terminus. It can also cleave other RNA substrates such as 4.5S RNA. The protein component plays an auxiliary but essential role in vivo by binding to the 5'-leader sequence and broadening the substrate specificity of the ribozyme. The sequence is that of Ribonuclease P protein component from Macrococcus caseolyticus (strain JCSC5402) (Macrococcoides caseolyticum).